We begin with the raw amino-acid sequence, 141 residues long: Small ribosomal subunit protein uS12 (141 aa).

Belongs to the universal ribosomal protein uS12 family. In terms of assembly, part of the 30S ribosomal subunit.

In terms of biological role, with S4 and S5 plays an important role in translational accuracy. Located at the interface of the 30S and 50S subunits. This is Small ribosomal subunit protein uS12 from Methanosphaera stadtmanae (strain ATCC 43021 / DSM 3091 / JCM 11832 / MCB-3).